A 1534-amino-acid chain; its full sequence is Dicer-like protein 2 (1534 aa).

The span at 1–10 (MDQDPRKDNP) shows a compositional bias: basic and acidic residues. A disordered region spans residues 1–36 (MDQDPRKDNPVEMDVDRDDSSQDPDDNESFKSALDE). The span at 11–27 (VEMDVDRDDSSQDPDDN) shows a compositional bias: acidic residues. A Helicase ATP-binding domain is found at 65–249 (TPAALTARAY…IEKLEQVLDA (185 aa)). 78–85 (MFEASLKQ) serves as a coordination point for ATP. The DEAH box motif lies at 192 to 195 (DEAH). Positions 404–575 (KVQTLLKVLA…NAELELLDDP (172 aa)) constitute a Helicase C-terminal domain. A Dicer dsRNA-binding fold domain is found at 597–700 (ARSHLNHFCA…LPTKVSDFLA (104 aa)). RNase III domains lie at 959 to 1107 (MSLV…MCGG) and 1153 to 1353 (LEPL…VDSG). Glu-1193, Asp-1339, and Glu-1342 together coordinate Mg(2+). The region spanning 1383–1483 (HPNVELQILA…AEKGCLVIKA (101 aa)) is the DRBM domain. A compositionally biased stretch (basic and acidic residues) spans 1492–1504 (KAAAKEDKGHNTE). The tract at residues 1492 to 1534 (KAAAKEDKGHNTENGDANADNGQSGEKEEVPDCRDADGDTVMN) is disordered. The segment covering 1505 to 1515 (NGDANADNGQS) has biased composition (polar residues). Basic and acidic residues predominate over residues 1516–1528 (GEKEEVPDCRDAD).

This sequence belongs to the helicase family. Dicer subfamily. Requires Mg(2+) as cofactor. It depends on Mn(2+) as a cofactor.

Dicer-like endonuclease involved in cleaving double-stranded RNA in the RNA interference (RNAi) pathway. Produces 21 to 25 bp dsRNAs (siRNAs) which target the selective destruction of homologous RNAs leading to sequence-specific suppression of gene expression, called post-transcriptional gene silencing (PTGS). Part of a broad host defense response against viral infection and transposons. Controls the expression of the non-LTR retrotransposon Tad in the African strain, Adiomopoume. In Neurospora crassa (strain ATCC 24698 / 74-OR23-1A / CBS 708.71 / DSM 1257 / FGSC 987), this protein is Dicer-like protein 2 (dcl-2).